The chain runs to 419 residues: L-rhamnose isomerase (419 aa).

Residues histidine 262, aspartate 294, and aspartate 296 each coordinate Mn(2+).

The protein belongs to the rhamnose isomerase family. As to quaternary structure, homotetramer. It depends on Mn(2+) as a cofactor.

It is found in the cytoplasm. It carries out the reaction L-rhamnopyranose = L-rhamnulose. The protein operates within carbohydrate degradation; L-rhamnose degradation; glycerone phosphate from L-rhamnose: step 1/3. Functionally, catalyzes the interconversion of L-rhamnose and L-rhamnulose. The protein is L-rhamnose isomerase of Shigella sonnei (strain Ss046).